A 266-amino-acid chain; its full sequence is Heat-inducible transcription repressor HrcA (266 aa).

It belongs to the HrcA family.

Its function is as follows. Negative regulator of class I heat shock genes (grpE-dnaK-dnaJ and groELS operons). Prevents heat-shock induction of these operons. In Helicobacter pylori (strain J99 / ATCC 700824) (Campylobacter pylori J99), this protein is Heat-inducible transcription repressor HrcA.